Here is a 389-residue protein sequence, read N- to C-terminus: Chaperone protein DnaJ (389 aa).

One can recognise a J domain in the interval 5 to 79 (KRDYYEVLGI…RKLYDQFGHE (75 aa)). The segment at 151–234 (GCNKTIKYER…CRSNKYTVTN (84 aa)) adopts a CR-type zinc-finger fold. Residues cysteine 164, cysteine 167, cysteine 182, cysteine 185, cysteine 208, cysteine 211, cysteine 222, and cysteine 225 each coordinate Zn(2+). CXXCXGXG motif repeat units follow at residues 164–171 (CHSCNGFG), 182–189 (CKDCNGNG), 208–215 (CSTCNGQG), and 222–229 (CKTCRSNK).

It belongs to the DnaJ family. In terms of assembly, homodimer. Requires Zn(2+) as cofactor.

It localises to the cytoplasm. In terms of biological role, participates actively in the response to hyperosmotic and heat shock by preventing the aggregation of stress-denatured proteins and by disaggregating proteins, also in an autonomous, DnaK-independent fashion. Unfolded proteins bind initially to DnaJ; upon interaction with the DnaJ-bound protein, DnaK hydrolyzes its bound ATP, resulting in the formation of a stable complex. GrpE releases ADP from DnaK; ATP binding to DnaK triggers the release of the substrate protein, thus completing the reaction cycle. Several rounds of ATP-dependent interactions between DnaJ, DnaK and GrpE are required for fully efficient folding. Also involved, together with DnaK and GrpE, in the DNA replication of plasmids through activation of initiation proteins. The protein is Chaperone protein DnaJ of Mycoplasma genitalium (strain ATCC 33530 / DSM 19775 / NCTC 10195 / G37) (Mycoplasmoides genitalium).